Here is a 724-residue protein sequence, read N- to C-terminus: Probable zinc transporter MSC2 (724 aa).

Residues M1 to L6 are Cytoplasmic-facing. Residues L7–V27 traverse the membrane as a helical segment. Over P28–A58 the chain is Lumenal. A helical membrane pass occupies residues I59–F79. The Cytoplasmic portion of the chain corresponds to N80–Y90. Residues Y91 to Q111 traverse the membrane as a helical segment. Topologically, residues S112–A134 are lumenal. A helical membrane pass occupies residues L135–L155. Over R156–S174 the chain is Cytoplasmic. The chain crosses the membrane as a helical span at residues L175–T195. Residues L196–R219 are Lumenal-facing. Residues F220 to V240 traverse the membrane as a helical segment. Residues N241 to Y244 are Cytoplasmic-facing. Residues N245 to L265 traverse the membrane as a helical segment. The Lumenal portion of the chain corresponds to K266–W298. The chain crosses the membrane as a helical span at residues L299–F319. At N320–R386 the chain is on the cytoplasmic side. The chain crosses the membrane as a helical span at residues S387–F407. Over R408–D417 the chain is Lumenal. Residues S418–T438 form a helical membrane-spanning segment. Topologically, residues K439–L453 are cytoplasmic. A helical transmembrane segment spans residues G454–V474. The Lumenal portion of the chain corresponds to E475–E491. The chain crosses the membrane as a helical span at residues L492–H512. The Cytoplasmic portion of the chain corresponds to G513–I528. The helical transmembrane segment at F529–I549 threads the bilayer. Residues K550 to L563 are Lumenal-facing. A helical membrane pass occupies residues L564–I584. The Cytoplasmic portion of the chain corresponds to L585–N724. The tract at residues T614–E653 is disordered. Residues S634–K648 are compositionally biased toward basic and acidic residues.

It belongs to the cation diffusion facilitator (CDF) transporter (TC 2.A.4) family. SLC30A subfamily.

The protein resides in the endoplasmic reticulum membrane. Its subcellular location is the nucleus membrane. In terms of biological role, probably act as a zinc ion transporter moving zinc from the nucleus/endoplasmic reticulum to the cytoplasm. Involved in zinc ion homeostasis and cellular distribution. The protein is Probable zinc transporter MSC2 (MSC2) of Saccharomyces cerevisiae (strain ATCC 204508 / S288c) (Baker's yeast).